The following is a 581-amino-acid chain: Proteasome-associated ATPase (581 aa).

A disordered region spans residues 1-28; the sequence is MTSSDLTQRKGLTMSDSTPDTPRSTPED. A compositionally biased stretch (polar residues) spans 14-24; sequence MSDSTPDTPRS. The stretch at 27–66 forms a coiled coil; the sequence is EDAARRLAVLSAQNERLAQVLGEARGKIVELQQQIEEFAK. 248–253 serves as a coordination point for ATP; that stretch reads GCGKTL. Positions 561–581 are disordered; sequence GSGRSAAGRTIETATSTGQYL. Over residues 572–581 the composition is skewed to polar residues; that stretch reads ETATSTGQYL. The interval 580-581 is docks into pockets in the proteasome alpha-ring; that stretch reads YL.

The protein belongs to the AAA ATPase family. As to quaternary structure, homohexamer. Assembles into a hexameric ring structure that caps the 20S proteasome core. Strongly interacts with the prokaryotic ubiquitin-like protein Pup through a hydrophobic interface; the interacting region of ARC lies in its N-terminal coiled-coil domain. There is one Pup binding site per ARC hexamer ring. Upon ATP-binding, the C-terminus of ARC interacts with the alpha-rings of the proteasome core, possibly by binding to the intersubunit pockets.

The protein operates within protein degradation; proteasomal Pup-dependent pathway. Its function is as follows. ATPase which is responsible for recognizing, binding, unfolding and translocation of pupylated proteins into the bacterial 20S proteasome core particle. May be essential for opening the gate of the 20S proteasome via an interaction with its C-terminus, thereby allowing substrate entry and access to the site of proteolysis. Thus, the C-termini of the proteasomal ATPase may function like a 'key in a lock' to induce gate opening and therefore regulate proteolysis. The polypeptide is Proteasome-associated ATPase (Sanguibacter keddieii (strain ATCC 51767 / DSM 10542 / NCFB 3025 / ST-74)).